Here is a 448-residue protein sequence, read N- to C-terminus: Damage-control phosphatase ARMT1 (448 aa).

D257 and N258 together coordinate Mn(2+). Substrate is bound at residue D257–N258. E262 and D295 together coordinate S-adenosyl-L-methionine. D295 serves as a coordination point for Mn(2+). Substrate contacts are provided by residues D371–R375 and K408. A Subfamily III RTxK motif motif is present at residues R405–K408.

The protein belongs to the damage-control phosphatase family. Sugar phosphate phosphatase III subfamily. Requires Mn(2+) as cofactor. Ni(2+) serves as cofactor. In terms of processing, automethylated.

The catalysed reaction is beta-D-fructose 1-phosphate + H2O = D-fructose + phosphate. The enzyme catalyses beta-D-fructose 6-phosphate = dihydroxyacetone + D-glyceraldehyde 3-phosphate. It catalyses the reaction L-glutamyl-[protein] + S-adenosyl-L-methionine = [protein]-L-glutamate 5-O-methyl ester + S-adenosyl-L-homocysteine. Metal-dependent phosphatase that shows phosphatase activity against several substrates, including fructose-1-phosphate and fructose-6-phosphate. Its preference for fructose-1-phosphate, a strong glycating agent that causes DNA damage rather than a canonical yeast metabolite, suggests a damage-control function in hexose phosphate metabolism. Has also been shown to have O-methyltransferase activity that methylates glutamate residues of target proteins to form gamma-glutamyl methyl ester residues. Possibly methylates PCNA, suggesting it is involved in the DNA damage response. The polypeptide is Damage-control phosphatase ARMT1 (Danio rerio (Zebrafish)).